The following is a 529-amino-acid chain: Bifunctional purine biosynthesis protein PurH (529 aa).

Residues 1-148 (MQQHRPVRRA…KNHKDVAIVV (148 aa)) enclose the MGS-like domain.

The protein belongs to the PurH family.

The catalysed reaction is (6R)-10-formyltetrahydrofolate + 5-amino-1-(5-phospho-beta-D-ribosyl)imidazole-4-carboxamide = 5-formamido-1-(5-phospho-D-ribosyl)imidazole-4-carboxamide + (6S)-5,6,7,8-tetrahydrofolate. It catalyses the reaction IMP + H2O = 5-formamido-1-(5-phospho-D-ribosyl)imidazole-4-carboxamide. It participates in purine metabolism; IMP biosynthesis via de novo pathway; 5-formamido-1-(5-phospho-D-ribosyl)imidazole-4-carboxamide from 5-amino-1-(5-phospho-D-ribosyl)imidazole-4-carboxamide (10-formyl THF route): step 1/1. Its pathway is purine metabolism; IMP biosynthesis via de novo pathway; IMP from 5-formamido-1-(5-phospho-D-ribosyl)imidazole-4-carboxamide: step 1/1. This is Bifunctional purine biosynthesis protein PurH from Erwinia tasmaniensis (strain DSM 17950 / CFBP 7177 / CIP 109463 / NCPPB 4357 / Et1/99).